We begin with the raw amino-acid sequence, 193 residues long: Dual-action ribosomal maturation protein DarP (193 aa).

Belongs to the DarP family.

It localises to the cytoplasm. Its function is as follows. Member of a network of 50S ribosomal subunit biogenesis factors which assembles along the 30S-50S interface, preventing incorrect 23S rRNA structures from forming. Promotes peptidyl transferase center (PTC) maturation. The chain is Dual-action ribosomal maturation protein DarP from Vibrio cholerae serotype O1 (strain ATCC 39315 / El Tor Inaba N16961).